The primary structure comprises 680 residues: Conserved oligomeric Golgi complex subunit 6 (680 aa).

Residues 479–517 (HKSKKSGQLPRRSRTSSDSSQLTSVDALLSSSPSPPQNN) are disordered.

Belongs to the COG6 family. Component of the conserved oligomeric Golgi complex which is composed of eight different subunits and is required for normal Golgi morphology and localization. Interacts with COG5, COG7 and COG8.

It localises to the golgi apparatus membrane. In terms of biological role, required for normal Golgi function. The protein is Conserved oligomeric Golgi complex subunit 6 of Arabidopsis thaliana (Mouse-ear cress).